The chain runs to 92 residues: Small ribosomal subunit protein uS19 (92 aa).

The protein belongs to the universal ribosomal protein uS19 family.

Its function is as follows. Protein S19 forms a complex with S13 that binds strongly to the 16S ribosomal RNA. The sequence is that of Small ribosomal subunit protein uS19 from Jannaschia sp. (strain CCS1).